A 191-amino-acid chain; its full sequence is Protein hugin (191 aa).

Positions 1 to 24 (MCGPSYCTLLLIAASCYILVCSHA) are cleaved as a signal peptide. A propeptide spanning residues 25–119 (KSLQGTSKLD…LTYYLLLQKL (95 aa)) is cleaved from the precursor. Residues Leu-137 and Leu-181 each carry the leucine amide modification. A propeptide spanning residues 185-191 (AQVCGGD) is cleaved from the precursor.

Belongs to the pyrokinin family. Expressed in a subgroup of neurosecretory cells in the subesophageal ganglion from embryonic stage 9 to larval stages.

The protein resides in the secreted. Functionally, probably has a role in larval molting. The protein is Protein hugin (Hug) of Drosophila melanogaster (Fruit fly).